A 591-amino-acid chain; its full sequence is Monoterpene synthase 8, chloroplastic (591 aa).

The transit peptide at 1-46 (MSLLLAPPSYFPFRGLRRSTAAKQPPCLRLVKCTADRQSPEAARRS) directs the protein to the chloroplast. Mg(2+)-binding residues include aspartate 346, aspartate 350, and glutamate 497. A DDXXD motif motif is present at residues 346 to 350 (DDVYD).

The protein belongs to the terpene synthase family. Tpsa subfamily. Requires Mg(2+) as cofactor. Mn(2+) is required as a cofactor. As to expression, highly expressed in flowers, petals and sepals, but almost undetectable in vegetative organs.

It localises to the plastid. It is found in the chloroplast. It carries out the reaction (2E)-geranyl diphosphate + H2O = (R)-linalool + diphosphate. It catalyses the reaction (2E)-geranyl diphosphate + H2O = (S)-linalool + diphosphate. The catalysed reaction is (2E,6E)-farnesyl diphosphate = (S)-beta-bisabolene + diphosphate. The enzyme catalyses (2E,6E)-farnesyl diphosphate = (E,R)-alpha-bisabolene + diphosphate. It carries out the reaction (2E,6E)-farnesyl diphosphate = (E)-beta-farnesene + diphosphate. It catalyses the reaction (2E,6E)-farnesyl diphosphate = beta-sesquiphellandrene + diphosphate. The catalysed reaction is (2E,6E)-farnesyl diphosphate = (1S,5S,6R)-alpha-bergamotene + diphosphate. It functions in the pathway secondary metabolite biosynthesis; terpenoid biosynthesis. Functionally, sesquiterpene and monoterpene synthase involved in the biosynthesis of volatile compounds present in floral scent. Mediates the conversion of (2E)-geranyl diphosphate (GPP) into linalool, with trace levels of myrcene, limonene and (Z)-beta-ocimene. Also acts as a sesquiterpene synthase by catalyzing the conversion of farnesyl diphosphate (FPP) to alpha-bergamotene and beta-bisabolene and to minor products including alpha-curcumene, cis-alpha-bisabolene, beta-farnesene and beta-sesquiphellandrene, as well as seven other unidentified sesquiterpenes. This Hedychium coronarium (White butterfly ginger-lily) protein is Monoterpene synthase 8, chloroplastic.